We begin with the raw amino-acid sequence, 620 residues long: Proline--tRNA ligase (620 aa).

Belongs to the class-II aminoacyl-tRNA synthetase family. ProS type 1 subfamily. As to quaternary structure, homodimer.

The protein localises to the cytoplasm. The catalysed reaction is tRNA(Pro) + L-proline + ATP = L-prolyl-tRNA(Pro) + AMP + diphosphate. Catalyzes the attachment of proline to tRNA(Pro) in a two-step reaction: proline is first activated by ATP to form Pro-AMP and then transferred to the acceptor end of tRNA(Pro). As ProRS can inadvertently accommodate and process non-cognate amino acids such as alanine and cysteine, to avoid such errors it has two additional distinct editing activities against alanine. One activity is designated as 'pretransfer' editing and involves the tRNA(Pro)-independent hydrolysis of activated Ala-AMP. The other activity is designated 'posttransfer' editing and involves deacylation of mischarged Ala-tRNA(Pro). The misacylated Cys-tRNA(Pro) is not edited by ProRS. The chain is Proline--tRNA ligase from Streptococcus thermophilus (strain CNRZ 1066).